A 269-amino-acid polypeptide reads, in one-letter code: Putative pyruvate, phosphate dikinase regulatory protein (269 aa).

Residue 151–158 (GISRTSKT) coordinates ADP.

Belongs to the pyruvate, phosphate/water dikinase regulatory protein family. PDRP subfamily.

The enzyme catalyses N(tele)-phospho-L-histidyl/L-threonyl-[pyruvate, phosphate dikinase] + ADP = N(tele)-phospho-L-histidyl/O-phospho-L-threonyl-[pyruvate, phosphate dikinase] + AMP + H(+). It catalyses the reaction N(tele)-phospho-L-histidyl/O-phospho-L-threonyl-[pyruvate, phosphate dikinase] + phosphate + H(+) = N(tele)-phospho-L-histidyl/L-threonyl-[pyruvate, phosphate dikinase] + diphosphate. Bifunctional serine/threonine kinase and phosphorylase involved in the regulation of the pyruvate, phosphate dikinase (PPDK) by catalyzing its phosphorylation/dephosphorylation. The polypeptide is Putative pyruvate, phosphate dikinase regulatory protein (Staphylococcus aureus).